Reading from the N-terminus, the 431-residue chain is Enolase (431 aa).

Gln164 is a (2R)-2-phosphoglycerate binding site. Residue Glu206 is the Proton donor of the active site. The Mg(2+) site is built by Asp243, Glu286, and Asp313. Lys338, Arg367, Ser368, and Lys389 together coordinate (2R)-2-phosphoglycerate. Lys338 acts as the Proton acceptor in catalysis.

This sequence belongs to the enolase family. Mg(2+) is required as a cofactor.

It localises to the cytoplasm. The protein resides in the secreted. It is found in the cell surface. It carries out the reaction (2R)-2-phosphoglycerate = phosphoenolpyruvate + H2O. Its pathway is carbohydrate degradation; glycolysis; pyruvate from D-glyceraldehyde 3-phosphate: step 4/5. In terms of biological role, catalyzes the reversible conversion of 2-phosphoglycerate (2-PG) into phosphoenolpyruvate (PEP). It is essential for the degradation of carbohydrates via glycolysis. The chain is Enolase from Chloroflexus aggregans (strain MD-66 / DSM 9485).